Here is a 374-residue protein sequence, read N- to C-terminus: Chaperone protein DnaJ (374 aa).

The region spanning 5-70 is the J domain; the sequence is DYYEILGVSR…QKRAAYDQYG (66 aa). The CR-type zinc-finger motif lies at 129–207; it reads GVTREIRIPT…CHGHGRVEKS (79 aa). Zn(2+)-binding residues include Cys-142, Cys-145, Cys-159, Cys-162, Cys-181, Cys-184, Cys-195, and Cys-198. 4 CXXCXGXG motif repeats span residues 142–149, 159–166, 181–188, and 195–202; these read CDVCHGSG, CPTCHGQG, CPTCQGQG, and CTKCHGHG.

Belongs to the DnaJ family. In terms of assembly, homodimer. Zn(2+) serves as cofactor.

It is found in the cytoplasm. Functionally, participates actively in the response to hyperosmotic and heat shock by preventing the aggregation of stress-denatured proteins and by disaggregating proteins, also in an autonomous, DnaK-independent fashion. Unfolded proteins bind initially to DnaJ; upon interaction with the DnaJ-bound protein, DnaK hydrolyzes its bound ATP, resulting in the formation of a stable complex. GrpE releases ADP from DnaK; ATP binding to DnaK triggers the release of the substrate protein, thus completing the reaction cycle. Several rounds of ATP-dependent interactions between DnaJ, DnaK and GrpE are required for fully efficient folding. Also involved, together with DnaK and GrpE, in the DNA replication of plasmids through activation of initiation proteins. This is Chaperone protein DnaJ from Sodalis glossinidius (strain morsitans).